Here is a 343-residue protein sequence, read N- to C-terminus: Dehydrodolichyl diphosphate synthase complex subunit SRT1 (343 aa).

Belongs to the UPP synthase family. In terms of assembly, forms an active dehydrodolichyl diphosphate synthase complex with NUS1. Mg(2+) is required as a cofactor.

It is found in the lipid droplet. It catalyses the reaction n isopentenyl diphosphate + (2E,6E)-farnesyl diphosphate = a di-trans,poly-cis-polyprenyl diphosphate + n diphosphate. It participates in protein modification; protein glycosylation. In terms of biological role, with NUS1, forms the dehydrodolichyl diphosphate synthase (DDS) complex, an essential component of the dolichol monophosphate (Dol-P) biosynthetic machinery. Adds multiple copies of isopentenyl pyrophosphate (IPP) to farnesyl pyrophosphate (FPP) to produce dehydrodolichyl diphosphate (Dedol-PP), a precursor of dolichol which is utilized as a sugar carrier in protein glycosylation in the endoplasmic reticulum (ER). The chain is Dehydrodolichyl diphosphate synthase complex subunit SRT1 from Saccharomyces cerevisiae (strain ATCC 204508 / S288c) (Baker's yeast).